A 364-amino-acid polypeptide reads, in one-letter code: Flagellar P-ring protein (364 aa).

Positions 1–29 are cleaved as a signal peptide; it reads MKTIGGKVFRHAAILAACVLPLWCQPALA.

This sequence belongs to the FlgI family. As to quaternary structure, the basal body constitutes a major portion of the flagellar organelle and consists of four rings (L,P,S, and M) mounted on a central rod.

The protein resides in the periplasm. The protein localises to the bacterial flagellum basal body. Its function is as follows. Assembles around the rod to form the L-ring and probably protects the motor/basal body from shearing forces during rotation. In Dechloromonas aromatica (strain RCB), this protein is Flagellar P-ring protein.